Reading from the N-terminus, the 200-residue chain is MKRYGIIGGTFDPIHYGHLYIAYEAKKQLNLDNVIFMPAGNPPHKEGKKVTDSLLRYKMVKKAIEDFSGFSISDYEIDKKGFSYTYETLEHFKNNDVELFFITGADCLMDIETWERADTILSLCNLVVFSRGGFSNKNLIKQKEYIEKKYSVNIIVLPLKRLEISSTDIRKRINNKERVDFFVPRSIIKLIEENSLYKEE.

It belongs to the NadD family.

It catalyses the reaction nicotinate beta-D-ribonucleotide + ATP + H(+) = deamido-NAD(+) + diphosphate. The protein operates within cofactor biosynthesis; NAD(+) biosynthesis; deamido-NAD(+) from nicotinate D-ribonucleotide: step 1/1. In terms of biological role, catalyzes the reversible adenylation of nicotinate mononucleotide (NaMN) to nicotinic acid adenine dinucleotide (NaAD). The protein is Probable nicotinate-nucleotide adenylyltransferase of Clostridium botulinum (strain Eklund 17B / Type B).